The primary structure comprises 194 residues: Adenylate kinase isoenzyme 1 (194 aa).

Position 1 is an N-acetylmethionine (Met1). Residue 18 to 23 (GSGKGT) coordinates ATP. Ser38 carries the phosphoserine modification. Residues 38–67 (STGDLLRAEVSSGSARGKMLSEIMEKGQLV) are NMP. AMP is bound by residues Thr39, Arg44, 65–67 (QLV), 94–97 (GYPR), and Gln101. Positions 131-141 (KRGETSGRVDD) are LID. An ATP-binding site is contributed by Arg132. AMP is bound by residues Arg138 and Arg149. Position 177 (Gly177) interacts with ATP.

It belongs to the adenylate kinase family. AK1 subfamily. In terms of assembly, monomer. Requires Mg(2+) as cofactor.

The protein resides in the cytoplasm. The catalysed reaction is a ribonucleoside 5'-phosphate + ATP = a ribonucleoside 5'-diphosphate + ADP. It carries out the reaction AMP + ATP = 2 ADP. It catalyses the reaction dAMP + ATP = dADP + ADP. The enzyme catalyses dATP + AMP = dADP + ADP. The catalysed reaction is dAMP + dATP = 2 dADP. It carries out the reaction a 2'-deoxyribonucleoside 5'-diphosphate + ATP = a 2'-deoxyribonucleoside 5'-triphosphate + ADP. It catalyses the reaction a ribonucleoside 5'-diphosphate + ATP = a ribonucleoside 5'-triphosphate + ADP. The enzyme catalyses CDP + GTP = CTP + GDP. The catalysed reaction is GDP + ATP = GTP + ADP. It carries out the reaction UDP + ATP = UTP + ADP. It catalyses the reaction GTP + UDP = UTP + GDP. The enzyme catalyses dTDP + GTP = dTTP + GDP. The catalysed reaction is dCDP + GTP = dCTP + GDP. It carries out the reaction dGDP + ATP = dGTP + ADP. It catalyses the reaction dADP + GTP = dATP + GDP. The enzyme catalyses thiamine diphosphate + ADP = thiamine triphosphate + AMP. Functionally, catalyzes the reversible transfer of the terminal phosphate group between ATP and AMP. Also displays broad nucleoside diphosphate kinase activity. Plays an important role in cellular energy homeostasis and in adenine nucleotide metabolism. Also catalyzes at a very low rate the synthesis of thiamine triphosphate (ThTP) from thiamine diphosphate (ThDP) and ADP. In Bos taurus (Bovine), this protein is Adenylate kinase isoenzyme 1.